Here is a 287-residue protein sequence, read N- to C-terminus: Bifunctional protein FolD 2 (287 aa).

NADP(+) contacts are provided by residues 166-168 (GAS) and Ile-232.

The protein belongs to the tetrahydrofolate dehydrogenase/cyclohydrolase family. Homodimer.

The catalysed reaction is (6R)-5,10-methylene-5,6,7,8-tetrahydrofolate + NADP(+) = (6R)-5,10-methenyltetrahydrofolate + NADPH. It carries out the reaction (6R)-5,10-methenyltetrahydrofolate + H2O = (6R)-10-formyltetrahydrofolate + H(+). It participates in one-carbon metabolism; tetrahydrofolate interconversion. In terms of biological role, catalyzes the oxidation of 5,10-methylenetetrahydrofolate to 5,10-methenyltetrahydrofolate and then the hydrolysis of 5,10-methenyltetrahydrofolate to 10-formyltetrahydrofolate. The chain is Bifunctional protein FolD 2 from Hydrogenovibrio crunogenus (strain DSM 25203 / XCL-2) (Thiomicrospira crunogena).